Reading from the N-terminus, the 90-residue chain is Cell division topological specificity factor (90 aa).

This sequence belongs to the MinE family.

Prevents the cell division inhibition by proteins MinC and MinD at internal division sites while permitting inhibition at polar sites. This ensures cell division at the proper site by restricting the formation of a division septum at the midpoint of the long axis of the cell. This is Cell division topological specificity factor from Lachnoclostridium phytofermentans (strain ATCC 700394 / DSM 18823 / ISDg) (Clostridium phytofermentans).